Reading from the N-terminus, the 472-residue chain is MFRTILLCSLGLTTLSSAATHNITSIFSSSLSPGAQIFLPSDTNYTEDVTQRWTTYDAPTYIGAIKPATVKDIQNIVTLAASNKIPFLATAGGHGATITYVNCTNGIEIDISNFNTVSIDASNNTMTVGGAVRFEDIIPPLYEAGKELPTGTAPCVGLVGATIGGGIGNLQGLHGLILDSLLSVELVTPSGDVLTVSTSENADLFWAIRGAGANFGIITSATYKIYNATNNGLAMSANYLFPASENRSVWEIFQSFDETLPPELSLTAYSGFNQTTQEMELIVNAIYYGPKEEGVSYLTNFAALNATETNLMMVAWPNVTSSMAFGADGDACTTGSYLNTWGLGLAETNIDTYTTFFNELQAFSQAHPDYSGIFVVDRYSSAAAAAVPANSTSYGYGYRNINSHLLFENSYPSDNSTLDNAVNSFMRSIRSQFQRTSGFSEMEIYLNYAHGDEGADVWYSPQHLPKLSQLKS.

Positions 1–18 are cleaved as a signal peptide; sequence MFRTILLCSLGLTTLSSA. Asparagine 22, asparagine 44, asparagine 102, asparagine 123, asparagine 227, asparagine 246, asparagine 273, asparagine 305, asparagine 318, asparagine 390, and asparagine 415 each carry an N-linked (GlcNAc...) asparagine glycan. In terms of domain architecture, FAD-binding PCMH-type spans 54-228; sequence TTYDAPTYIG…TSATYKIYNA (175 aa).

The protein belongs to the oxygen-dependent FAD-linked oxidoreductase family.

It functions in the pathway secondary metabolite biosynthesis. Its function is as follows. FAD-linked oxidoreductase; part of the gene cluster that mediates the biosynthesis of azaphilones, a class of fungal metabolites characterized by a highly oxygenated pyrano-quinone bicyclic core and exhibiting a broad range of bioactivities. In the first step, the non-reducing polyketide synthase azaA forms the hexaketide precursor from successive condensations of five malonyl-CoA units, presumably with a simple acetyl-CoA starter unit. The reactive polyketide chain then undergoes a PT-mediated C2-C7 cyclization to afford the aromatic ring and is eventually released as an aldehyde through the R-domain. The putative ketoreductase azaE is proposed to catalyze the reduction of the terminal ketone resulting in the early culture product FK17-P2a. The monooxygenase azaH was demonstrated to be the only enzyme required to convert FK17-P2a to azanigerone E. AzaH first hydroxylates the benzaldehyde intermediate FK17-P2a at C4, which triggers the formation of the pyran-ring to afford azanigerone E. In parallel, the 2,4-dimethylhexanoyl chain is synthesized by the HR-PKS azaB and is proposed to be transferred to the C4-hydroxyl of azanigerone E by the acyltransferase azaD directly from the ACP domain of azaB. Alternatively, the 2,4-dimethyl-hexanoyl chain may be offloaded from the HR-PKS as a carboxylic acid and converted to an acyl-CoA by azaF. The resulting acyl-CoA molecule could then be taken up as a substrate by AzaD to form azanigerone B. To yield the carboxylic acid substituent in azanigerone A, the hydroxypropyl side chain of azanigerone B would need to undergo a C-C oxidative cleavage catalyzed by cytochrome P450 AzaI. AzaI is proposed to act on a vicinal diol that leads to a C-C bond scission either through an alkoxyradical intermediate or a peroxy complex. In the biosynthesis of azanigerone A, azanigerone B first undergoes hydroxylation at C10, possibly catalyzed by one of the two FAD-dependent monooxygenases encoded in the cluster, azaG or azaL, resulting in the vicinal diol azanigerone C. Oxidative cleavage of azanigerone C by azaI would yield the corresponding aldehyde derivative of azanigerone A. Finally, the dehydrogenase azaJ is proposed to convert the aldehyde functional group into the carboxylic acid, completing the conversion from azanigerone B to azanigerone A. Alternatively, the oxidation of aldehyde to carboxylic acid may be catalyzed by the same P450 enzyme azaI via consecutive oxidation or by endogenous alcohol dehydrogenase. The sequence is that of FAD-linked oxidoreductase azaL from Aspergillus niger (strain ATCC 1015 / CBS 113.46 / FGSC A1144 / LSHB Ac4 / NCTC 3858a / NRRL 328 / USDA 3528.7).